Consider the following 379-residue polypeptide: Protein RecA (379 aa).

79–86 contributes to the ATP binding site; sequence GPESSGKT.

The protein belongs to the RecA family.

It is found in the cytoplasm. In terms of biological role, can catalyze the hydrolysis of ATP in the presence of single-stranded DNA, the ATP-dependent uptake of single-stranded DNA by duplex DNA, and the ATP-dependent hybridization of homologous single-stranded DNAs. It interacts with LexA causing its activation and leading to its autocatalytic cleavage. The sequence is that of Protein RecA from Streptococcus uberis (strain ATCC BAA-854 / 0140J).